A 247-amino-acid chain; its full sequence is Malonyl-[acyl-carrier protein] O-methyltransferase (247 aa).

Belongs to the methyltransferase superfamily.

It catalyses the reaction malonyl-[ACP] + S-adenosyl-L-methionine = malonyl-[ACP] methyl ester + S-adenosyl-L-homocysteine. It participates in cofactor biosynthesis; biotin biosynthesis. Its function is as follows. Converts the free carboxyl group of a malonyl-thioester to its methyl ester by transfer of a methyl group from S-adenosyl-L-methionine (SAM). It allows to synthesize pimeloyl-ACP via the fatty acid synthetic pathway. This chain is Malonyl-[acyl-carrier protein] O-methyltransferase, found in Buchnera aphidicola subsp. Baizongia pistaciae (strain Bp).